The following is a 963-amino-acid chain: Importin-13 (963 aa).

HEAT repeat units lie at residues 24 to 54 (ENVE…QAQV), 56 to 88 (PQAW…KISR), 95 to 135 (TDQY…LSMM), 142 to 179 (AVAD…EFQT), 194 to 231 (LAVE…SWVQ), 236 to 268 (LQDC…NAIS), 276 to 325 (VNTL…ALLD), 330 to 372 (WQSF…DDIL), 375 to 438 (EAEK…YEML), 440 to 476 (AELL…FQSI), 487 to 522 (VVPG…WLAD), 524 to 558 (PVMI…CREC), 562 to 600 (LPPY…LLSA), 603 to 648 (VEEN…SNLF), 676 to 716 (PVVV…VKTL), 720 to 754 (FAPM…VHIF), 761 to 803 (FPPI…ALKR), 815 to 845 (VKAV…TELL), 860 to 893 (EDGR…FALN), and 897 to 931 (FSLL…QQIL). An Importin N-terminal domain is found at 45–111 (AQKWLMQAQV…KAHSFTQITR (67 aa)).

It belongs to the importin beta family. As to quaternary structure, interacts with UBC9, RAN, RBM8A, eIF-1A and PAX6. As to expression, expressed in fetal brain, heart, intestine and kidney.

The protein localises to the cytoplasm. It localises to the nucleus. Functions in nuclear protein import as nuclear transport receptor. Serves as receptor for nuclear localization signals (NLS) in cargo substrates. Is thought to mediate docking of the importin/substrate complex to the nuclear pore complex (NPC) through binding to nucleoporin and the complex is subsequently translocated through the pore by an energy requiring, Ran-dependent mechanism. At the nucleoplasmic side of the NPC, Ran binds to the importin, the importin/substrate complex dissociates and importin is re-exported from the nucleus to the cytoplasm where GTP hydrolysis releases Ran. The directionality of nuclear import is thought to be conferred by an asymmetric distribution of the GTP- and GDP-bound forms of Ran between the cytoplasm and nucleus. Mediates the nuclear import of UBC9, the RBM8A/MAGOH complex, PAX6 and probably other members of the paired homeobox family. Also mediates nuclear export of eIF-1A, and the cytoplasmic release of eIF-1A is triggered by the loading of import substrates onto IPO13. The polypeptide is Importin-13 (Ipo13) (Rattus norvegicus (Rat)).